The following is a 475-amino-acid chain: UDP-glucosyltransferase 102 (475 aa).

UDP-alpha-D-glucose is bound by residues serine 278, 344–345 (WA), 362–370 (HCGWNSTLE), and 384–387 (YGEQ).

This sequence belongs to the UDP-glycosyltransferase family.

It participates in secondary metabolite biosynthesis; terpenoid biosynthesis. In terms of biological role, probable component of the triterpene saponins (e.g. ginsenosides) biosynthetic pathway. No detectable activity toward protopanaxatriol (PPT). The sequence is that of UDP-glucosyltransferase 102 (UGT102) from Panax ginseng (Korean ginseng).